The primary structure comprises 143 residues: Ribosome maturation factor RimP (143 aa).

This sequence belongs to the RimP family.

The protein resides in the cytoplasm. Its function is as follows. Required for maturation of 30S ribosomal subunits. The polypeptide is Ribosome maturation factor RimP (Neisseria meningitidis serogroup C (strain 053442)).